Consider the following 480-residue polypeptide: ATP synthase subunit beta (480 aa).

158–165 provides a ligand contact to ATP; that stretch reads GGAGVGKT.

Belongs to the ATPase alpha/beta chains family. In terms of assembly, F-type ATPases have 2 components, CF(1) - the catalytic core - and CF(0) - the membrane proton channel. CF(1) has five subunits: alpha(3), beta(3), gamma(1), delta(1), epsilon(1). CF(0) has three main subunits: a(1), b(2) and c(9-12). The alpha and beta chains form an alternating ring which encloses part of the gamma chain. CF(1) is attached to CF(0) by a central stalk formed by the gamma and epsilon chains, while a peripheral stalk is formed by the delta and b chains.

The protein resides in the cell inner membrane. The catalysed reaction is ATP + H2O + 4 H(+)(in) = ADP + phosphate + 5 H(+)(out). Functionally, produces ATP from ADP in the presence of a proton gradient across the membrane. The catalytic sites are hosted primarily by the beta subunits. The protein is ATP synthase subunit beta of Acidobacterium capsulatum (strain ATCC 51196 / DSM 11244 / BCRC 80197 / JCM 7670 / NBRC 15755 / NCIMB 13165 / 161).